Here is a 648-residue protein sequence, read N- to C-terminus: Threonine--tRNA ligase (648 aa).

The region spanning 1-61 is the TGS domain; the sequence is MIKITFPNTS…NENASVKLYK (61 aa). The catalytic stretch occupies residues 243–542; that stretch reads DHRRIGKEME…MIEHTGGKFP (300 aa). The Zn(2+) site is built by Cys338, His389, and His519.

The protein belongs to the class-II aminoacyl-tRNA synthetase family. As to quaternary structure, homodimer. Zn(2+) serves as cofactor.

The protein resides in the cytoplasm. The enzyme catalyses tRNA(Thr) + L-threonine + ATP = L-threonyl-tRNA(Thr) + AMP + diphosphate + H(+). Its function is as follows. Catalyzes the attachment of threonine to tRNA(Thr) in a two-step reaction: L-threonine is first activated by ATP to form Thr-AMP and then transferred to the acceptor end of tRNA(Thr). Also edits incorrectly charged L-seryl-tRNA(Thr). The polypeptide is Threonine--tRNA ligase (Azobacteroides pseudotrichonymphae genomovar. CFP2).